The primary structure comprises 121 residues: Large ribosomal subunit protein uL22 (121 aa).

This sequence belongs to the universal ribosomal protein uL22 family. In terms of assembly, part of the 50S ribosomal subunit.

Functionally, this protein binds specifically to 23S rRNA; its binding is stimulated by other ribosomal proteins, e.g. L4, L17, and L20. It is important during the early stages of 50S assembly. It makes multiple contacts with different domains of the 23S rRNA in the assembled 50S subunit and ribosome. In terms of biological role, the globular domain of the protein is located near the polypeptide exit tunnel on the outside of the subunit, while an extended beta-hairpin is found that lines the wall of the exit tunnel in the center of the 70S ribosome. In Synechococcus sp. (strain CC9605), this protein is Large ribosomal subunit protein uL22.